We begin with the raw amino-acid sequence, 132 residues long: Large ribosomal subunit protein bL19 (132 aa).

It belongs to the bacterial ribosomal protein bL19 family.

Functionally, this protein is located at the 30S-50S ribosomal subunit interface and may play a role in the structure and function of the aminoacyl-tRNA binding site. The chain is Large ribosomal subunit protein bL19 from Maricaulis maris (strain MCS10) (Caulobacter maris).